Consider the following 2230-residue polypeptide: Genome polyprotein (2230 aa).

The segment at 59–80 (TAEVGAHQTEPLKTSVDKPGSK) is disordered. 2 consecutive short sequence motifs ((L)YPX(n)L motif) follow at residues 171–175 (YPHGL) and 204–209 (YPVWEL). Positions 770-840 (MLDRIASGDL…PRKVKGLFSQ (71 aa)) are involved in P1-2A pentamerization. A helical membrane pass occupies residues 1015 to 1035 (TVEIINTVLCFVKSGILLYVI). Residues 1047–1074 (IGLLQVMNYADIGCSVISCGKIFSKMLE) are membrane-penetrating ability. Positions 1131-1156 (KKKDVLNVLKENQHRIEKAIEEADQF) form a coiled coil. Residues 1208-1370 (HQKLKNLGSI…SFYKNAHNDM (163 aa)) enclose the SF3 helicase domain. 1234-1241 (GKRGGGKS) is a binding site for ATP. Residues 1466-1486 (WVAIGAAVGVLGVLVGGWFVY) form a helical membrane-spanning segment. Y1501 bears the O-(5'-phospho-RNA)-tyrosine mark. Residues 1516–1730 (DPVDSQSTLE…VAKLVTQEMF (215 aa)) enclose the Peptidase C3 domain. Residues H1565, D1605, and C1693 each act as for protease 3C activity in the active site. The 122-residue stretch at 1979-2100 (DVGLDLDFSS…VFSRNVQIDN (122 aa)) folds into the RdRp catalytic domain.

It belongs to the picornaviridae polyprotein family. In terms of assembly, homodimer. Homomultimer; probably interacts with membranes in a multimeric form. Seems to assemble into amyloid-like fibers. As to quaternary structure, homodimer. Monomer. Interacts with protein 3CD. Interacts with host ACBD3. In terms of assembly, interacts with protein 3AB. As to quaternary structure, interacts with human MAVS. Homodimer; disulfide-linked. In terms of assembly, homopentamer. Homooligomer. As to quaternary structure, interacts with capsid protein VP2. Interacts with capsid protein VP3. Interacts with capsid protein VP1. Interacts with capsid protein VP3. In terms of assembly, interacts with capsid protein VP1. Interacts with capsid protein VP2. Specific enzymatic cleavages by viral protease in vivo yield a variety of precursors and mature proteins. Polyprotein processing intermediates are produced, such as P1-2A which is a functional precursor of the structural proteins, VP0 which is a VP4-VP2 precursor, VP1-2A precursor, 3ABC precursor which is a stable and catalytically active precursor of 3A, 3B and 3C proteins, 3AB and 3CD precursors. The assembly signal 2A is removed from VP1-2A by a host protease, possibly host Cathepsin L. This cleavage occurs over a region of 3 amino-acids probably generating VP1 proteins with heterogeneous C-termini. Post-translationally, during virion maturation, immature virions are rendered infectious following cleavage of VP0 into VP4 and VP2. This maturation seems to be an autocatalytic event triggered by the presence of RNA in the capsid and is followed by a conformational change of the particle. In terms of processing, the assembly signal 2A is removed from VP1-2A by a host protease, possibly host Cathepsin L in naked virions. This cleavage does not occur in enveloped virions. This cleavage occurs over a region of 3 amino-acids probably generating VP1 proteins with heterogeneous C-termini. VPg is uridylylated prior to priming replication into VPg-pUpU. Post-translationally, unlike other picornaviruses, does not seem to be myristoylated.

The protein resides in the virion. The protein localises to the host endosome. It localises to the host multivesicular body. It is found in the host membrane. Its subcellular location is the host mitochondrion outer membrane. The protein resides in the host cytoplasm. The protein localises to the host cytoplasmic vesicle membrane. The enzyme catalyses RNA(n) + a ribonucleoside 5'-triphosphate = RNA(n+1) + diphosphate. The catalysed reaction is a ribonucleoside 5'-triphosphate + H2O = a ribonucleoside 5'-diphosphate + phosphate + H(+). It catalyses the reaction Selective cleavage of Gln-|-Gly bond in the poliovirus polyprotein. In other picornavirus reactions Glu may be substituted for Gln, and Ser or Thr for Gly.. In terms of biological role, capsid proteins VP1, VP2, and VP3 form a closed capsid enclosing the viral positive strand RNA genome. All these proteins contain a beta-sheet structure called beta-barrel jelly roll. Together they form an icosahedral capsid (T=3) composed of 60 copies of each VP1, VP2, and VP3, with a diameter of approximately 300 Angstroms. VP1 is situated at the 12 fivefold axes, whereas VP2 and VP3 are located at the quasi-sixfold axes. The naked capsid interacts with the host receptor HAVCR1 to provide virion attachment to and probably entry into the target cell. VP0 precursor is a component of the immature procapsids. Its function is as follows. Plays a role in the assembly of the 12 pentamers into an icosahedral structure. Has not been detected in mature virions, supposedly owing to its small size. Functionally, precursor component of immature procapsids that corresponds to an extended form of the structural protein VP1. After maturation, possibly by the host Cathepsin L, the assembly signal 2A is cleaved to give rise to the mature VP1 protein. In terms of biological role, functions as a viroporin. Affects membrane integrity and causes an increase in membrane permeability. Involved in host intracellular membrane rearrangements probably to give rise to the viral factories. Does not disrupt calcium homeostasis or glycoprotein trafficking. Antagonizes the innate immune response of the host by suppressing IFN-beta synthesis, which it achieves by interfering with the RIG-I/IFIH1 pathway. Affects membrane integrity and causes an increase in membrane permeability. Its function is as follows. Associates with and induces structural rearrangements of intracellular membranes. Displays RNA-binding activity. Functionally, the precursor 3ABC is targeted to the mitochondrial membrane where protease 3C activity cleaves and inhibits the host antiviral protein MAVS, thereby disrupting activation of IRF3 through the IFIH1/MDA5 pathway. In vivo, the protease activity of 3ABC precursor is more efficient in cleaving the 2BC precursor than that of protein 3C. The 3ABC precursor may therefore play a role in the proteolytic processing of the polyprotein. Possible viroporin. In terms of biological role, interacts with the 3CD precursor and with RNA structures found at both the 5'- and 3'-termini of the viral genome. Since the 3AB precursor contains the hydrophobic domain 3A, it probably anchors the whole viral replicase complex to intracellular membranes on which viral RNA synthesis occurs. May serve as membrane anchor to the 3AB and 3ABC precursors via its hydrophobic domain. May interact with RNA. Its function is as follows. Acts as a primer for viral RNA replication and remains covalently bound to viral genomic RNA. VPg is uridylylated prior to priming replication into VPg-pUpU. The VPg-pUpU is then used as primer on the genomic RNA poly(A) by the RNA-dependent RNA polymerase to replicate the viral genome. Functionally, cysteine protease that generates mature viral proteins from the precursor polyprotein. In addition to its proteolytic activity, it binds to viral RNA, and thus influences viral genome replication. RNA and substrate bind cooperatively to the protease. Cleaves IKBKG/NEMO to impair innate immune signaling. Cleaves host PABPC1 which may participate in the switch of viral translation to RNA synthesis. In terms of biological role, interacts with the 3AB precursor and with RNA structures found at both the 5'- and 3'-termini of the viral genome. Disrupts TLR3 signaling by degrading the host adapter protein TICAM1/TRIF. RNA-directed RNA polymerase 3D-POL replicates genomic and antigenomic RNA by recognizing replications specific signals. The protein is Genome polyprotein of Callithrix (Owl-faced monkey).